The sequence spans 289 residues: Shikimate dehydrogenase (NADP(+)) (289 aa).

Shikimate is bound by residues Ser19–Ser21 and Thr66. The active-site Proton acceptor is Lys70. Asn91 and Asp106 together coordinate shikimate. NADP(+) contacts are provided by residues Gly131–Ala135, Asn155–Lys160, and Leu229. Tyr231 provides a ligand contact to shikimate. Gly252 is an NADP(+) binding site.

This sequence belongs to the shikimate dehydrogenase family. In terms of assembly, homodimer.

The enzyme catalyses shikimate + NADP(+) = 3-dehydroshikimate + NADPH + H(+). Its pathway is metabolic intermediate biosynthesis; chorismate biosynthesis; chorismate from D-erythrose 4-phosphate and phosphoenolpyruvate: step 4/7. Functionally, involved in the biosynthesis of the chorismate, which leads to the biosynthesis of aromatic amino acids. Catalyzes the reversible NADPH linked reduction of 3-dehydroshikimate (DHSA) to yield shikimate (SA). The sequence is that of Shikimate dehydrogenase (NADP(+)) from Halothermothrix orenii (strain H 168 / OCM 544 / DSM 9562).